A 184-amino-acid chain; its full sequence is Acireductone dioxygenase (184 aa).

His-97, His-99, Glu-103, and His-141 together coordinate Fe(2+). 4 residues coordinate Ni(2+): His-97, His-99, Glu-103, and His-141.

The protein belongs to the acireductone dioxygenase (ARD) family. In terms of assembly, monomer. It depends on Fe(2+) as a cofactor. The cofactor is Ni(2+).

It carries out the reaction 1,2-dihydroxy-5-(methylsulfanyl)pent-1-en-3-one + O2 = 3-(methylsulfanyl)propanoate + CO + formate + 2 H(+). It catalyses the reaction 1,2-dihydroxy-5-(methylsulfanyl)pent-1-en-3-one + O2 = 4-methylsulfanyl-2-oxobutanoate + formate + 2 H(+). The protein operates within amino-acid biosynthesis; L-methionine biosynthesis via salvage pathway; L-methionine from S-methyl-5-thio-alpha-D-ribose 1-phosphate: step 5/6. Catalyzes 2 different reactions between oxygen and the acireductone 1,2-dihydroxy-3-keto-5-methylthiopentene (DHK-MTPene) depending upon the metal bound in the active site. Fe-containing acireductone dioxygenase (Fe-ARD) produces formate and 2-keto-4-methylthiobutyrate (KMTB), the alpha-ketoacid precursor of methionine in the methionine recycle pathway. Ni-containing acireductone dioxygenase (Ni-ARD) produces methylthiopropionate, carbon monoxide and formate, and does not lie on the methionine recycle pathway. The polypeptide is Acireductone dioxygenase (Parvibaculum lavamentivorans (strain DS-1 / DSM 13023 / NCIMB 13966)).